A 204-amino-acid chain; its full sequence is Quinol oxidase subunit 3 (204 aa).

A run of 5 helical transmembrane segments spans residues 27 to 47, 66 to 86, 95 to 115, 140 to 160, and 184 to 204; these read FWIF…TFFV, LVMI…IAVH, GVVI…GCEI, LLGT…GILI, and FLDV…LGGL.

Belongs to the cytochrome c oxidase subunit 3 family.

It is found in the cell membrane. The enzyme catalyses 2 a quinol + O2 = 2 a quinone + 2 H2O. In terms of biological role, catalyzes quinol oxidation with the concomitant reduction of oxygen to water. Major component for energy conversion during vegetative growth. The chain is Quinol oxidase subunit 3 (qoxC) from Bacillus spizizenii (strain ATCC 23059 / NRRL B-14472 / W23) (Bacillus subtilis subsp. spizizenii).